Reading from the N-terminus, the 186-residue chain is MKTIEVDDELYHYIASRTQAIGESASDILRRLLRLPASPQPFVLVQENMINELKDLAKLPKQKKQLHQQDKVIKQVEFVLASSLFNNETKGVNRFLYLLSALYKADPESFSHATENVQGSERIYFARDEQTILATGSSVKAKQIPESPFWVITNNNTERKGIILCALMNAMELPEELVARIKAQFN.

The protein belongs to the SeqA family. Homodimer. Polymerizes to form helical filaments.

Its subcellular location is the cytoplasm. Negative regulator of replication initiation, which contributes to regulation of DNA replication and ensures that replication initiation occurs exactly once per chromosome per cell cycle. Binds to pairs of hemimethylated GATC sequences in the oriC region, thus preventing assembly of replication proteins and re-initiation at newly replicated origins. Repression is relieved when the region becomes fully methylated. This Glaesserella parasuis serovar 5 (strain SH0165) (Haemophilus parasuis) protein is Negative modulator of initiation of replication.